Consider the following 283-residue polypeptide: ATP phosphoribosyltransferase (283 aa).

This sequence belongs to the ATP phosphoribosyltransferase family. Long subfamily. Mg(2+) is required as a cofactor.

Its subcellular location is the cytoplasm. It catalyses the reaction 1-(5-phospho-beta-D-ribosyl)-ATP + diphosphate = 5-phospho-alpha-D-ribose 1-diphosphate + ATP. Its pathway is amino-acid biosynthesis; L-histidine biosynthesis; L-histidine from 5-phospho-alpha-D-ribose 1-diphosphate: step 1/9. With respect to regulation, feedback inhibited by histidine. Functionally, catalyzes the condensation of ATP and 5-phosphoribose 1-diphosphate to form N'-(5'-phosphoribosyl)-ATP (PR-ATP). Has a crucial role in the pathway because the rate of histidine biosynthesis seems to be controlled primarily by regulation of HisG enzymatic activity. This Bifidobacterium longum subsp. infantis (strain ATCC 15697 / DSM 20088 / JCM 1222 / NCTC 11817 / S12) protein is ATP phosphoribosyltransferase.